A 268-amino-acid chain; its full sequence is ClpXP adapter protein SpxH (268 aa).

Belongs to the SpxH family. In terms of assembly, interacts with Spx.

Its subcellular location is the cytoplasm. In terms of biological role, adapter protein required for efficient degradation of Spx by ClpXP under non-stress conditions. Interaction with Spx stabilizes Spx and exposes the C-terminus of Spx for recognition and proteolysis by ClpXP. The sequence is that of ClpXP adapter protein SpxH from Staphylococcus aureus (strain COL).